A 49-amino-acid chain; its full sequence is Large ribosomal subunit protein bL33A (49 aa).

Belongs to the bacterial ribosomal protein bL33 family.

The chain is Large ribosomal subunit protein bL33A from Staphylococcus haemolyticus (strain JCSC1435).